Consider the following 180-residue polypeptide: Adenine phosphoribosyltransferase (180 aa).

An N-acetylalanine modification is found at Ala2. Phosphoserine occurs at positions 4, 15, and 30. A Phosphotyrosine modification is found at Tyr60. Residue Ser66 is modified to Phosphoserine. The residue at position 114 (Lys114) is an N6-acetyllysine. Thr135 is subject to Phosphothreonine.

It belongs to the purine/pyrimidine phosphoribosyltransferase family. In terms of assembly, homodimer.

It localises to the cytoplasm. It carries out the reaction AMP + diphosphate = 5-phospho-alpha-D-ribose 1-diphosphate + adenine. Its pathway is purine metabolism; AMP biosynthesis via salvage pathway; AMP from adenine: step 1/1. Catalyzes a salvage reaction resulting in the formation of AMP, that is energically less costly than de novo synthesis. In Cricetulus griseus (Chinese hamster), this protein is Adenine phosphoribosyltransferase.